The chain runs to 590 residues: Multidrug resistance-like ATP-binding protein MdlA (590 aa).

One can recognise an ABC transmembrane type-1 domain in the interval 18 to 303 (YLGAVALLVI…LAWMFNIVER (286 aa)). 6 helical membrane-spanning segments follow: residues 23-43 (ALLV…GIVV), 53-73 (TGQI…VYLL), 134-154 (GVLT…MMST), 155-175 (QISW…AIMI), 248-268 (IYIA…WMVV), and 280-300 (FMMY…MFNI). The ABC transporter domain maps to 337-570 (VNIHQFTYPQ…SGWYRDMYRY (234 aa)). 369–376 (GPTGSGKS) lines the ATP pocket.

The protein belongs to the ABC transporter superfamily. Drug exporter-2 (TC 3.A.1.117) family.

Its subcellular location is the cell inner membrane. It carries out the reaction ATP + H2O + xenobioticSide 1 = ADP + phosphate + xenobioticSide 2.. The chain is Multidrug resistance-like ATP-binding protein MdlA (mdlA) from Escherichia coli (strain K12).